Here is a 119-residue protein sequence, read N- to C-terminus: Non-structural protein 3b (119 aa).

A DRBM domain is found at 2–83 (DYVSLLNQFW…ARLICEQLQA (82 aa)).

Interacts with host RUNX1 isoform b.

The protein resides in the host nucleus. The protein localises to the host nucleolus. It localises to the host mitochondrion. Induces host cell G0/G1 arrest and apoptosis. This Tylonycteris pachypus (Lesser bamboo bat) protein is Non-structural protein 3b.